The following is a 498-amino-acid chain: Pyruvate kinase (498 aa).

R53 serves as a coordination point for substrate. Positions 55, 57, 87, and 88 each coordinate K(+). 55-58 (NFSH) provides a ligand contact to ATP. R94 and K178 together coordinate ATP. E240 contacts Mg(2+). 3 residues coordinate substrate: G263, D264, and T296. Residue D264 coordinates Mg(2+).

It belongs to the pyruvate kinase family. In terms of assembly, homotetramer. Requires Mg(2+) as cofactor. K(+) serves as cofactor.

It catalyses the reaction pyruvate + ATP = phosphoenolpyruvate + ADP + H(+). The protein operates within carbohydrate degradation; glycolysis; pyruvate from D-glyceraldehyde 3-phosphate: step 5/5. In Trypanoplasma borreli, this protein is Pyruvate kinase (PYK).